Reading from the N-terminus, the 404-residue chain is Phospho-N-acetylmuramoyl-pentapeptide-transferase (404 aa).

A run of 10 helical transmembrane segments spans residues 30 to 50, 73 to 93, 100 to 120, 132 to 152, 209 to 229, 242 to 262, 274 to 294, 301 to 321, 326 to 346, and 381 to 401; these read SAAI…IIFF, IPTM…LLFA, IMLL…DDYI, GKFK…TLIF, YMWI…SNGA, TSAI…NVIF, LAEL…FLWY, IFMG…LAIV, LMIP…IIQV, and KIVT…LVTL.

It belongs to the glycosyltransferase 4 family. MraY subfamily. Mg(2+) serves as cofactor.

Its subcellular location is the cell inner membrane. The catalysed reaction is UDP-N-acetyl-alpha-D-muramoyl-L-alanyl-gamma-D-glutamyl-meso-2,6-diaminopimeloyl-D-alanyl-D-alanine + di-trans,octa-cis-undecaprenyl phosphate = di-trans,octa-cis-undecaprenyl diphospho-N-acetyl-alpha-D-muramoyl-L-alanyl-D-glutamyl-meso-2,6-diaminopimeloyl-D-alanyl-D-alanine + UMP. Its pathway is cell wall biogenesis; peptidoglycan biosynthesis. Functionally, catalyzes the initial step of the lipid cycle reactions in the biosynthesis of the cell wall peptidoglycan: transfers peptidoglycan precursor phospho-MurNAc-pentapeptide from UDP-MurNAc-pentapeptide onto the lipid carrier undecaprenyl phosphate, yielding undecaprenyl-pyrophosphoryl-MurNAc-pentapeptide, known as lipid I. This is Phospho-N-acetylmuramoyl-pentapeptide-transferase from Amoebophilus asiaticus (strain 5a2).